Consider the following 1040-residue polypeptide: Exosome RNA helicase MTR4 (1040 aa).

Position 2 is an N-acetylalanine (alanine 2). The tract at residues 16–77 (DSTSAAGAKK…GTDEPIFGKK (62 aa)) is disordered. Positions 23-33 (AKKDKEKEKWK) are enriched in basic and acidic residues. Residue lysine 24 forms a Glycyl lysine isopeptide (Lys-Gly) (interchain with G-Cter in SUMO2) linkage. Serine 38 carries the phosphoserine modification. Over residues 41–50 (KAGKRLDTKL) the composition is skewed to basic and acidic residues. N6-acetyllysine occurs at positions 49 and 76. ATP contacts are provided by residues isoleucine 137, 159-166 (AHTSAGKT), serine 162, glycine 164, lysine 165, and threonine 166. Residues 146–302 (IQCVDNNQSV…WICHLHKQPC (157 aa)) enclose the Helicase ATP-binding domain. Positions 250–253 (DEIH) match the DEIH box motif. Lysine 356 participates in a covalent cross-link: Glycyl lysine isopeptide (Lys-Gly) (interchain with G-Cter in SUMO2). The region spanning 403-575 (QMTKLDFNTD…NMVLNLLRVE (173 aa)) is the Helicase C-terminal domain. Glycyl lysine isopeptide (Lys-Gly) (interchain with G-Cter in SUMO2) cross-links involve residues lysine 682 and lysine 721.

This sequence belongs to the helicase family. SKI2 subfamily. Component of a TRAMP-like complex, an ATP-dependent exosome regulatory complex consisting of a helicase (MTREX), an oligadenylate polymerase (TENT4B or TENT4A), and a substrate specific RNA-binding factor (ZCCHC7 or ZCCHC8). Several TRAMP-like complexes exist with specific compositions and are associated with nuclear, or nucleolar RNA exosomes. Identified in the spliceosome C complex. Component of the poly(A) tail exosome targeting (PAXT) complex made of PABPN1, ZFC3H1 and MTREX that directs a subset of long and polyadenylated poly(A) RNAs for exosomal degradation. Component of the nuclear exosome targeting (NEXT) complex composed of MTREX, ZCCHC8, and RBM7 that directs a subset of non-coding short-lived RNAs for exosomal degradation. Interacts with ZCCHC8; this interaction bridges the interaction between RBM7 and MTREX. Binds to ZFC3H1 and RBM7 in a RNase-insensitive manner. Interacts with EXOSC10; the interaction mediates the association of MTREX with nuclear RNA exosomes. Interacts with isoform 1 of NVL in an ATP-dependent manner; the interaction is required to associate NVL with nuclear RNA exosome. Interacts with WDR74; the interaction dissociation in a late stage of rRNA synthesis is required for appropriate maturation of pre-60S particles and depends on the ATPase activity of NVL. Interacts with MPHOSPH6. Interacts with the RNA cap-binding complex proteins NCBP1 and SRRT. Interacts with NRDE2; the interaction is direct and negatively regulates MTREX function in exosomal degradation by changing its conformation precluding interaction with ZFC3H1, the RNA cap-binding complex proteins NCBP1 and SRRT, and association with the exosome. Associates with the RNA exosome complex.

It localises to the nucleus. It is found in the nucleoplasm. The protein resides in the nucleolus. The protein localises to the nucleus speckle. It catalyses the reaction ATP + H2O = ADP + phosphate + H(+). Activated when MTREX is incorporated into NEXT complex an the nuclear RNA exosome complex. Its function is as follows. Catalyzes the ATP-dependent unwinding of RNA duplexes with a single-stranded 3' RNA extension. Central subunit of many protein complexes, namely TRAMP-like, nuclear exosome targeting (NEXT) and poly(A) tail exosome targeting (PAXT). NEXT functions as an RNA exosome cofactor that directs a subset of non-coding short-lived RNAs for exosomal degradation. NEXT is involved in surveillance and turnover of aberrant transcripts and non-coding RNAs. PAXT directs a subset of long and polyadenylated poly(A) RNAs for exosomal degradation. The RNA exosome is fundamental for the degradation of RNA in eukaryotic nuclei. Substrate targeting is facilitated by its cofactor ZCCHC8, which links to RNA-binding protein adapters. Associated with the RNA exosome complex and involved in the 3'-processing of the 7S pre-RNA to the mature 5.8S rRNA. May be involved in pre-mRNA splicing. In the context of NEXT complex can also in vitro unwind DNA:RNA heteroduplexes with a 3' poly (A) RNA tracking strand. Can promote unwinding and degradation of structured RNA substrates when associated with the nuclear exosome and its cofactors. Can displace a DNA strand while translocating on RNA to ultimately degrade the RNA within a DNA/RNA heteroduplex. Plays a role in DNA damage response. This is Exosome RNA helicase MTR4 from Mus musculus (Mouse).